The sequence spans 379 residues: Queuine tRNA-ribosyltransferase (379 aa).

Residue Asp94 is the Proton acceptor of the active site. Residues 94-98, Asp148, Gln191, and Gly218 each bind substrate; that span reads DSGGF. Residues 249–255 are RNA binding; sequence GVGSPDA. The active-site Nucleophile is Asp268. The tract at residues 273–277 is RNA binding; important for wobble base 34 recognition; the sequence is TRIAR. The Zn(2+) site is built by Cys306, Cys308, Cys311, and His337.

It belongs to the queuine tRNA-ribosyltransferase family. In terms of assembly, homodimer. Within each dimer, one monomer is responsible for RNA recognition and catalysis, while the other monomer binds to the replacement base PreQ1. Requires Zn(2+) as cofactor.

The enzyme catalyses 7-aminomethyl-7-carbaguanine + guanosine(34) in tRNA = 7-aminomethyl-7-carbaguanosine(34) in tRNA + guanine. It participates in tRNA modification; tRNA-queuosine biosynthesis. In terms of biological role, catalyzes the base-exchange of a guanine (G) residue with the queuine precursor 7-aminomethyl-7-deazaguanine (PreQ1) at position 34 (anticodon wobble position) in tRNAs with GU(N) anticodons (tRNA-Asp, -Asn, -His and -Tyr). Catalysis occurs through a double-displacement mechanism. The nucleophile active site attacks the C1' of nucleotide 34 to detach the guanine base from the RNA, forming a covalent enzyme-RNA intermediate. The proton acceptor active site deprotonates the incoming PreQ1, allowing a nucleophilic attack on the C1' of the ribose to form the product. After dissociation, two additional enzymatic reactions on the tRNA convert PreQ1 to queuine (Q), resulting in the hypermodified nucleoside queuosine (7-(((4,5-cis-dihydroxy-2-cyclopenten-1-yl)amino)methyl)-7-deazaguanosine). The polypeptide is Queuine tRNA-ribosyltransferase (Staphylococcus epidermidis (strain ATCC 35984 / DSM 28319 / BCRC 17069 / CCUG 31568 / BM 3577 / RP62A)).